Consider the following 387-residue polypeptide: Erythronate-4-phosphate dehydrogenase (387 aa).

2 residues coordinate substrate: S45 and T67. Residue D147 coordinates NAD(+). R208 is an active-site residue. D232 is an NAD(+) binding site. E237 is a catalytic residue. The Proton donor role is filled by H254. G257 serves as a coordination point for NAD(+). Y258 is a binding site for substrate.

The protein belongs to the D-isomer specific 2-hydroxyacid dehydrogenase family. PdxB subfamily. In terms of assembly, homodimer.

It localises to the cytoplasm. It catalyses the reaction 4-phospho-D-erythronate + NAD(+) = (R)-3-hydroxy-2-oxo-4-phosphooxybutanoate + NADH + H(+). It functions in the pathway cofactor biosynthesis; pyridoxine 5'-phosphate biosynthesis; pyridoxine 5'-phosphate from D-erythrose 4-phosphate: step 2/5. Its function is as follows. Catalyzes the oxidation of erythronate-4-phosphate to 3-hydroxy-2-oxo-4-phosphonooxybutanoate. The polypeptide is Erythronate-4-phosphate dehydrogenase (Shewanella sediminis (strain HAW-EB3)).